Consider the following 107-residue polypeptide: UPF0145 protein ETA_21660 (107 aa).

This sequence belongs to the UPF0145 family.

The protein is UPF0145 protein ETA_21660 of Erwinia tasmaniensis (strain DSM 17950 / CFBP 7177 / CIP 109463 / NCPPB 4357 / Et1/99).